A 306-amino-acid polypeptide reads, in one-letter code: S-methyl-5'-thioadenosine phosphorylase (306 aa).

Phosphate contacts are provided by residues T21, 63-64 (RH), and 96-97 (SA). Substrate is bound at residue M198. Position 199 (S199) interacts with phosphate. 222–224 (DYD) is a substrate binding site.

It belongs to the PNP/MTAP phosphorylase family. MTAP subfamily. In terms of assembly, homotrimer.

The protein localises to the cytoplasm. Its subcellular location is the nucleus. It catalyses the reaction S-methyl-5'-thioadenosine + phosphate = 5-(methylsulfanyl)-alpha-D-ribose 1-phosphate + adenine. It participates in amino-acid biosynthesis; L-methionine biosynthesis via salvage pathway; S-methyl-5-thio-alpha-D-ribose 1-phosphate from S-methyl-5'-thioadenosine (phosphorylase route): step 1/1. Functionally, catalyzes the reversible phosphorylation of S-methyl-5'-thioadenosine (MTA) to adenine and 5-methylthioribose-1-phosphate. Involved in the breakdown of MTA, a major by-product of polyamine biosynthesis. Responsible for the first step in the methionine salvage pathway after MTA has been generated from S-adenosylmethionine. Has broad substrate specificity with 6-aminopurine nucleosides as preferred substrates. The polypeptide is S-methyl-5'-thioadenosine phosphorylase (Sclerotinia sclerotiorum (strain ATCC 18683 / 1980 / Ss-1) (White mold)).